The sequence spans 537 residues: Hexahomomethionine N-hydroxylase (537 aa).

Residues 7–27 (FNTCFQILLGFIVFIASITLL) traverse the membrane as a helical segment.

It belongs to the cytochrome P450 family. Heme is required as a cofactor. Highly expressed in hypocotyl and roots. Lower expression in siliques, stems and leaves. Barely detectable in flowers. Expressed only in the vascular bundles in apical plant parts.

The protein resides in the endoplasmic reticulum membrane. The enzyme catalyses L-hexahomomethionine + 2 reduced [NADPH--hemoprotein reductase] + 2 O2 = (E)-9-(methylsulfanyl)nonanal oxime + 2 oxidized [NADPH--hemoprotein reductase] + CO2 + 3 H2O + 2 H(+). It carries out the reaction L-pentahomomethionine + 2 reduced [NADPH--hemoprotein reductase] + 2 O2 = (E)-8-(methylsulfanyl)octanal oxime + 2 oxidized [NADPH--hemoprotein reductase] + CO2 + 3 H2O + 2 H(+). The catalysed reaction is an L-polyhomomethionine + 2 reduced [NADPH--hemoprotein reductase] + 2 O2 = an (E)-omega-(methylsulfanyl)-alkanal oxime + 2 oxidized [NADPH--hemoprotein reductase] + CO2 + 3 H2O + 2 H(+). Catalyzes the conversion of the long chain elongated methionines penta- and hexahomomethionine to their corresponding aldoximes 8-methylthiooctanaldoxime and 9-methylthiononanaldoxime. The chain is Hexahomomethionine N-hydroxylase (CYP79F2) from Arabidopsis thaliana (Mouse-ear cress).